Reading from the N-terminus, the 338-residue chain is Glycerol-3-phosphate dehydrogenase [NAD(P)+] (338 aa).

Ser-14, Tyr-15, His-35, and Lys-109 together coordinate NADPH. Sn-glycerol 3-phosphate is bound by residues Lys-109, Gly-138, and Thr-140. Ala-142 contributes to the NADPH binding site. Lys-194, Asp-247, Ser-257, Arg-258, and Asn-259 together coordinate sn-glycerol 3-phosphate. Lys-194 acts as the Proton acceptor in catalysis. Arg-258 contributes to the NADPH binding site. NADPH is bound by residues Val-282 and Glu-284.

The protein belongs to the NAD-dependent glycerol-3-phosphate dehydrogenase family.

The protein resides in the cytoplasm. It carries out the reaction sn-glycerol 3-phosphate + NAD(+) = dihydroxyacetone phosphate + NADH + H(+). The catalysed reaction is sn-glycerol 3-phosphate + NADP(+) = dihydroxyacetone phosphate + NADPH + H(+). It functions in the pathway membrane lipid metabolism; glycerophospholipid metabolism. Functionally, catalyzes the reduction of the glycolytic intermediate dihydroxyacetone phosphate (DHAP) to sn-glycerol 3-phosphate (G3P), the key precursor for phospholipid synthesis. The sequence is that of Glycerol-3-phosphate dehydrogenase [NAD(P)+] from Shewanella baltica (strain OS195).